The primary structure comprises 523 residues: Magnesium/proton exchanger 1 (523 aa).

11 consecutive transmembrane segments (helical) span residues 24-44 (LLPI…CFIG), 88-108 (IADV…LATI), 125-145 (GTLV…CVVM), 157-177 (LGVW…LYII), 185-205 (VITL…LLHA), 325-345 (VIGI…AFVP), 349-369 (IAHG…IAYG), 377-397 (ISCV…AAGT), 428-448 (VNIY…NYFV), 461-481 (LSFS…VLVL), and 495-515 (MWAW…VVLS).

The protein belongs to the Ca(2+):cation antiporter (CaCA) (TC 2.A.19) family. MHX subfamily.

The protein resides in the vacuole membrane. In terms of biological role, vacuolar transporter that exchanges protons with Mg(2+), Zn(2+) and Fe(2+) ions. May control the partitioning of Mg(2+) and Zn(2+) between plant organs. The polypeptide is Magnesium/proton exchanger 1 (MHX1) (Oryza sativa subsp. japonica (Rice)).